Reading from the N-terminus, the 810-residue chain is Valine--tRNA ligase (810 aa).

The 'HIGH' region signature appears at 45–55; sequence PTISGQLHIGH. A 'KMSKS' region motif is present at residues 534–538; it reads KMSKS. Residue Lys537 participates in ATP binding.

Belongs to the class-I aminoacyl-tRNA synthetase family. ValS type 2 subfamily. Monomer.

The protein resides in the cytoplasm. The enzyme catalyses tRNA(Val) + L-valine + ATP = L-valyl-tRNA(Val) + AMP + diphosphate. Catalyzes the attachment of valine to tRNA(Val). As ValRS can inadvertently accommodate and process structurally similar amino acids such as threonine, to avoid such errors, it has a 'posttransfer' editing activity that hydrolyzes mischarged Thr-tRNA(Val) in a tRNA-dependent manner. In Ehrlichia ruminantium (strain Welgevonden), this protein is Valine--tRNA ligase.